Reading from the N-terminus, the 350-residue chain is Hydroxymethylglutaryl-CoA synthase (350 aa).

Glu83 (proton donor/acceptor) is an active-site residue. The active-site Acyl-thioester intermediate is the Cys115. Residues Cys115 and Thr156 each coordinate (3S)-3-hydroxy-3-methylglutaryl-CoA. Residue Arg204 coordinates CoA. (3S)-3-hydroxy-3-methylglutaryl-CoA-binding residues include Thr206 and His239. The active-site Proton donor/acceptor is the His239. Lys244 is a binding site for CoA. Residues Asn271 and Ser301 each contribute to the (3S)-3-hydroxy-3-methylglutaryl-CoA site.

It belongs to the thiolase-like superfamily. Archaeal HMG-CoA synthase family. As to quaternary structure, interacts with acetoacetyl-CoA thiolase that catalyzes the precedent step in the pathway and with a DUF35 protein. The acetoacetyl-CoA thiolase/HMG-CoA synthase complex channels the intermediate via a fused CoA-binding site, which allows for efficient coupling of the endergonic thiolase reaction with the exergonic HMGCS reaction.

The catalysed reaction is acetoacetyl-CoA + acetyl-CoA + H2O = (3S)-3-hydroxy-3-methylglutaryl-CoA + CoA + H(+). It functions in the pathway metabolic intermediate biosynthesis; (R)-mevalonate biosynthesis; (R)-mevalonate from acetyl-CoA: step 2/3. Functionally, catalyzes the condensation of acetyl-CoA with acetoacetyl-CoA to form 3-hydroxy-3-methylglutaryl-CoA (HMG-CoA). Functions in the mevalonate (MVA) pathway leading to isopentenyl diphosphate (IPP), a key precursor for the biosynthesis of isoprenoid compounds that are building blocks of archaeal membrane lipids. This chain is Hydroxymethylglutaryl-CoA synthase, found in Pyrococcus horikoshii (strain ATCC 700860 / DSM 12428 / JCM 9974 / NBRC 100139 / OT-3).